Consider the following 578-residue polypeptide: Alpha-(1,6)-fucosyltransferase (578 aa).

Over 1-9 (MRPWTGSWR) the chain is Cytoplasmic. Residues 10 to 30 (WIMLILFAWGTLLFYIGGHLV) traverse the membrane as a helical; Signal-anchor for type II membrane protein segment. The Lumenal portion of the chain corresponds to 31–578 (RDNENPDHSS…KYPTYQEAEK (548 aa)). Disulfide bonds link Cys207–Cys269, Cys215–Cys233, and Cys221–Cys225. Residues 209-496 (KAKKLVCNIN…PDASAHFHSL (288 aa)) enclose the GT23 domain. The SH3-binding motif lies at 302–308 (PRPPYLP). The segment at 368–369 (RR) is important for donor substrate binding. An intrachain disulfide couples Cys468 to Cys475. Positions 505–566 (QNAHNQLAIY…PSYKVKEKIE (62 aa)) constitute an SH3 domain.

This sequence belongs to the glycosyltransferase 23 family.

The protein localises to the golgi apparatus. Its subcellular location is the golgi stack membrane. It catalyses the reaction N(4)-{beta-D-GlcNAc-(1-&gt;2)-alpha-D-Man-(1-&gt;3)-[beta-D-GlcNAc-(1-&gt;2)-alpha-D-Man-(1-&gt;6)]-beta-D-Man-(1-&gt;4)-beta-D-GlcNAc-(1-&gt;4)-beta-D-GlcNAc}-L-asparaginyl-[protein] + GDP-beta-L-fucose = an N(4)-{beta-D-GlcNAc-(1-&gt;2)-alpha-D-Man-(1-&gt;3)-[beta-D-GlcNAc-(1-&gt;2)-alpha-D-Man-(1-&gt;6)]-beta-D-Man-(1-&gt;4)-beta-D-GlcNAc-(1-&gt;4)-[alpha-L-Fuc-(1-&gt;6)]-beta-D-GlcNAc}-L-asparaginyl-[protein] + GDP + H(+). It participates in protein modification; protein glycosylation. Catalyzes the addition of fucose in alpha 1-6 linkage to the first GlcNAc residue, next to the peptide chains in N-glycans. This is Alpha-(1,6)-fucosyltransferase (fut8) from Xenopus tropicalis (Western clawed frog).